A 219-amino-acid chain; its full sequence is Peptidyl-tRNA hydrolase (219 aa).

Position 26 (tyrosine 26) interacts with tRNA. Catalysis depends on histidine 31, which acts as the Proton acceptor. Residues tyrosine 78, asparagine 80, and asparagine 126 each contribute to the tRNA site.

It belongs to the PTH family. In terms of assembly, monomer.

The protein resides in the cytoplasm. The enzyme catalyses an N-acyl-L-alpha-aminoacyl-tRNA + H2O = an N-acyl-L-amino acid + a tRNA + H(+). Its function is as follows. Hydrolyzes ribosome-free peptidyl-tRNAs (with 1 or more amino acids incorporated), which drop off the ribosome during protein synthesis, or as a result of ribosome stalling. Catalyzes the release of premature peptidyl moieties from peptidyl-tRNA molecules trapped in stalled 50S ribosomal subunits, and thus maintains levels of free tRNAs and 50S ribosomes. In Trichodesmium erythraeum (strain IMS101), this protein is Peptidyl-tRNA hydrolase.